A 361-amino-acid polypeptide reads, in one-letter code: Replication factor C subunit 3 (361 aa).

A compositionally biased stretch (low complexity) spans 1 to 28 (MAGATAATPMDIDAAAPPPGAAAKGKAP). Positions 1-39 (MAGATAATPMDIDAAAPPPGAAAKGKAPLSSTPGGRAAP) are disordered. 77-84 (YGPPGTGK) contributes to the ATP binding site.

It belongs to the activator 1 small subunits family. In terms of assembly, heterotetramer of subunits RFC2, RFC3, RFC4 and RFC5 that can form a complex with RFC1. In terms of tissue distribution, expressed in roots, leaves, shoot apical meristem (SAM), flag leaves and panicles.

The protein localises to the nucleus. May be involved in DNA replication and thus regulate cell proliferation. The chain is Replication factor C subunit 3 (RFC3) from Oryza sativa subsp. japonica (Rice).